We begin with the raw amino-acid sequence, 359 residues long: MEKSMYNSLKSILDKYQELNQELLKPEVLSDIKLYKKFSRELNSIKSISEEFSKYLNYEKTIESSKIILAQEKDEELISLAKKEILECEEKMSSLVEELKILLLPKDKNDELDVIMEIRGAAGGDEANIFAGDLFEMYSKWANNNNMKVSVLDRNYATSGGFTLIVFTISGEKAYSKLKFESGVHRVQRIPVTESKGRVHTSTATVTAMPEIDDDIEVEINPSDLKIDTFRSSGAGGQSVNTTDSAVRITHIPTGIISSSQEGRSQISNRELALKILKAKLYDHENQKKLEKVGQYRKLAGSGARSEKIRTYNYPQDRVTDHRINFSSSLKQIMEGKLQIIIDSLLAEEQAEKIKEVGI.

Gln-238 carries the N5-methylglutamine modification.

This sequence belongs to the prokaryotic/mitochondrial release factor family. In terms of processing, methylated by PrmC. Methylation increases the termination efficiency of RF1.

The protein resides in the cytoplasm. Peptide chain release factor 1 directs the termination of translation in response to the peptide chain termination codons UAG and UAA. The protein is Peptide chain release factor 1 of Mycoplasmopsis pulmonis (strain UAB CTIP) (Mycoplasma pulmonis).